We begin with the raw amino-acid sequence, 403 residues long: F-box/LRR-repeat protein At1g06630 (403 aa).

An F-box domain is found at 11–59 (RDAINWLPDEILGKILSLLATKQAVSTSVLSKKWRTLFKLVDTLEFDDS). LRR repeat units lie at residues 239 to 262 (LPNL…NLES) and 288 to 312 (IRNV…KYGL).

The protein is F-box/LRR-repeat protein At1g06630 of Arabidopsis thaliana (Mouse-ear cress).